A 1099-amino-acid polypeptide reads, in one-letter code: R3H domain-containing protein 1 (1099 aa).

A disordered region spans residues 111–146 (SFEKEEKPSKDEAEKEKASDKLPRKMLSRDSSQEYT). Positions 112 to 142 (FEKEEKPSKDEAEKEKASDKLPRKMLSRDSS) are enriched in basic and acidic residues. In terms of domain architecture, R3H spans 168–231 (RMMLLKLEQE…SVIVNKTSNT (64 aa)). Residues Ser-187 and Ser-262 each carry the phosphoserine modification. Residues 232–302 (RIPDQKFNEH…ARDRIFSQDS (71 aa)) form the SUZ domain. The tract at residues 267–287 (DNQMRIRLKDDRRSKSIEERE) is disordered. Ser-302 is subject to Phosphoserine. The disordered stretch occupies residues 331–370 (RVNKDASGRSTNSHQSSTENELKYSEPRPWSSTDSDSSLR). Polar residues-rich tracts occupy residues 338-349 (GRSTNSHQSSTE) and 360-370 (WSSTDSDSSLR). Phosphoserine is present on residues Ser-380, Ser-381, and Ser-393. 4 disordered regions span residues 387–439 (VLTR…SSHG), 490–537 (QTGQ…AANH), 583–625 (YIMT…HPVS), and 797–825 (EQVQ…PPPP). A compositionally biased stretch (low complexity) spans 391-422 (GDSSGSSKSIGRLSKTGSESSGSVGSSTGSLS). 2 stretches are compositionally biased toward pro residues: residues 519-532 (PGPP…PPQQ) and 588-611 (APPP…PGQP). The segment covering 797 to 817 (EQVQFPRTTSPCSSQQLQGHQ) has biased composition (polar residues). Arg-929 is subject to Asymmetric dimethylarginine; alternate. Arg-929 carries the omega-N-methylarginine; alternate modification. Residues 941–977 (PPAVLHGHIPNQQGQPGSRHGNRGRRQAKKAASTDLG) are disordered. Basic residues predominate over residues 960–969 (HGNRGRRQAK). A Phosphoserine modification is found at Ser-973.

In Homo sapiens (Human), this protein is R3H domain-containing protein 1 (R3HDM1).